Consider the following 335-residue polypeptide: MDKLKIIMEKGTERLKRGFAKMVKGGVIMDVTNAEQARIAEEAGAVAVMALHKVPADIRKAGGVARMAPVEKIQEIMDAVTIPVMAKCRIGHEAEARILEALGVDMIDESEVLTPADPFFHIYKKKFTAPFVCGARNLGEAVRRIWEGAAMIRTKGEAGTGNIIEAVRHVRLVNENIRLIQRMTDEEIYGVAEKFAEPYLRLAFSVKEISGLPKRVLENEPIYEGFTYREIVEDIYKILLEIKKLGRLPVVNFAAGGVATPADAALMMAMGMDGVFVGSGIFKSSNPPKMARAIVEAVNHWDEPDVLAEISREIGEPMRGQAIEELQVRMEERGI.

Residue aspartate 30 participates in D-ribose 5-phosphate binding. Lysine 87 (schiff-base intermediate with D-ribose 5-phosphate) is an active-site residue. Glycine 159 provides a ligand contact to D-ribose 5-phosphate. D-glyceraldehyde 3-phosphate is bound at residue arginine 171. D-ribose 5-phosphate-binding positions include glycine 257 and 278 to 279 (GS).

The protein belongs to the PdxS/SNZ family. Homohexamer. In the presence of PdxT, forms a dodecamer of heterodimers.

The enzyme catalyses aldehydo-D-ribose 5-phosphate + D-glyceraldehyde 3-phosphate + L-glutamine = pyridoxal 5'-phosphate + L-glutamate + phosphate + 3 H2O + H(+). Its pathway is cofactor biosynthesis; pyridoxal 5'-phosphate biosynthesis. Functionally, catalyzes the formation of pyridoxal 5'-phosphate from ribose 5-phosphate (RBP), glyceraldehyde 3-phosphate (G3P) and ammonia. The ammonia is provided by the PdxT subunit. Can also use ribulose 5-phosphate and dihydroxyacetone phosphate as substrates, resulting from enzyme-catalyzed isomerization of RBP and G3P, respectively. The protein is Pyridoxal 5'-phosphate synthase subunit PdxS of Pyrococcus horikoshii (strain ATCC 700860 / DSM 12428 / JCM 9974 / NBRC 100139 / OT-3).